We begin with the raw amino-acid sequence, 123 residues long: Small ribosomal subunit protein uS12 (123 aa).

Asp89 is subject to 3-methylthioaspartic acid.

It belongs to the universal ribosomal protein uS12 family. As to quaternary structure, part of the 30S ribosomal subunit. Contacts proteins S8 and S17. May interact with IF1 in the 30S initiation complex.

In terms of biological role, with S4 and S5 plays an important role in translational accuracy. Functionally, interacts with and stabilizes bases of the 16S rRNA that are involved in tRNA selection in the A site and with the mRNA backbone. Located at the interface of the 30S and 50S subunits, it traverses the body of the 30S subunit contacting proteins on the other side and probably holding the rRNA structure together. The combined cluster of proteins S8, S12 and S17 appears to hold together the shoulder and platform of the 30S subunit. The sequence is that of Small ribosomal subunit protein uS12 from Myxococcus xanthus.